A 199-amino-acid chain; its full sequence is Imidazole glycerol phosphate synthase subunit HisH 2 (199 aa).

One can recognise a Glutamine amidotransferase type-1 domain in the interval 1–199 (MIAVIDVSGN…NNFLSLESTC (199 aa)). Catalysis depends on Cys-76, which acts as the Nucleophile. Residues His-177 and Glu-179 contribute to the active site.

Heterodimer of HisH and HisF.

The protein localises to the cytoplasm. The enzyme catalyses 5-[(5-phospho-1-deoxy-D-ribulos-1-ylimino)methylamino]-1-(5-phospho-beta-D-ribosyl)imidazole-4-carboxamide + L-glutamine = D-erythro-1-(imidazol-4-yl)glycerol 3-phosphate + 5-amino-1-(5-phospho-beta-D-ribosyl)imidazole-4-carboxamide + L-glutamate + H(+). It catalyses the reaction L-glutamine + H2O = L-glutamate + NH4(+). Its pathway is amino-acid biosynthesis; L-histidine biosynthesis; L-histidine from 5-phospho-alpha-D-ribose 1-diphosphate: step 5/9. In terms of biological role, IGPS catalyzes the conversion of PRFAR and glutamine to IGP, AICAR and glutamate. The HisH subunit provides the glutamine amidotransferase activity that produces the ammonia necessary to HisF for the synthesis of IGP and AICAR. This chain is Imidazole glycerol phosphate synthase subunit HisH 2, found in Legionella pneumophila subsp. pneumophila (strain Philadelphia 1 / ATCC 33152 / DSM 7513).